The primary structure comprises 549 residues: Cation/acetate symporter ActP (549 aa).

A run of 13 helical transmembrane segments spans residues 33 to 53, 77 to 97, 103 to 123, 148 to 168, 183 to 203, 206 to 226, 262 to 282, 303 to 323, 355 to 375, 404 to 424, 428 to 448, 464 to 484, and 493 to 513; these read WQAIIMFLIFVVFTLGITYWA, LAIAGDYMSAASFLGISALVF, GLIYSLGFLVGWPIILFLIAE, ILSACGSLVVVALYLIAQMVG, IAVVLVGVLMMMYVLFGGMLA, WVQIIKAVLLLFGASFMAFMV, ISALSLGLGLMFGTAGLPHIL, GFMGYFYILTFIIGFGAIMLV, LFLGFISAVAFATILAVVAGL, VSKITVLVLGVIAIILGVLFE, IAFMVGLAFAIAASCNFPIIL, GGWLGLLTAVVLMILGPTIWV, and IFPYEYPALFSISVAFLGIWF.

The protein belongs to the sodium:solute symporter (SSF) (TC 2.A.21) family.

Its subcellular location is the cell inner membrane. In terms of biological role, transports acetate. In Salmonella gallinarum (strain 287/91 / NCTC 13346), this protein is Cation/acetate symporter ActP.